We begin with the raw amino-acid sequence, 239 residues long: 1-(5-phosphoribosyl)-5-[(5-phosphoribosylamino)methylideneamino] imidazole-4-carboxamide isomerase (239 aa).

Asp-8 (proton acceptor) is an active-site residue. Catalysis depends on Asp-129, which acts as the Proton donor.

It belongs to the HisA/HisF family.

Its subcellular location is the cytoplasm. It carries out the reaction 1-(5-phospho-beta-D-ribosyl)-5-[(5-phospho-beta-D-ribosylamino)methylideneamino]imidazole-4-carboxamide = 5-[(5-phospho-1-deoxy-D-ribulos-1-ylimino)methylamino]-1-(5-phospho-beta-D-ribosyl)imidazole-4-carboxamide. The protein operates within amino-acid biosynthesis; L-histidine biosynthesis; L-histidine from 5-phospho-alpha-D-ribose 1-diphosphate: step 4/9. The polypeptide is 1-(5-phosphoribosyl)-5-[(5-phosphoribosylamino)methylideneamino] imidazole-4-carboxamide isomerase (Legionella pneumophila (strain Lens)).